The sequence spans 914 residues: MPPPTAQFMGPTQAGQNESQNQSSGEAGEQNQEHGQGPTPILNQSQPASSQPQHQQQRNESISYYTNFNQPRYSTDASINSFLNISDNVPVTSTGGPSSGGAYSNLPRLSTSSTHQPPDLSQIGRGFSIVNNLFPQQQQLQNQHRQQQQQQQQQSHQQPPFKTPSFSTGLTGSSSQYQFLPRNDNTSQPPSKRNSVYLGPNDGPDFEFFSMQQSQQPQFQPSSRRESNSMRPPLLIPAATTKSQSNGTNNSGNMNTNADYESFFNTGTNNSNSNQNPYFLSSRNNSLKFNPEDFDFQFKRRNSFVRGTLDHSSQNAFIPESRLNSLSVNNKANGDPVADNVTNNMKGKSNEVDNDDGNDSSNNNNNNNNNNNNENNNDNNNDNNDNSINSATSTNIPNQEDHSLASTDTTSNSRKDLKEIEQRLRKHLNDEDNYSSAISRPLDKNDVIEGSEGLNKHIDESGMQPNIIKKRKKDDSTVYVKNEMPRTDPPMSKDNSTSAEGAAMANFSGKEPPIPDISSVSDDATNLIGATKVDQLMLIIQARKKGFTEKVNTTQDGDLLFNQTMDILPPKSELVGGVEKPKGTQNTRAVKKHECPYCHRLFSQATHLEVHVRSHIGYKPFVCDYCGKRFTQGGNLRTHERLHTGEKPYSCDICDKKFSRKGNLAAHLVTHQKLKPFVCKLENCNKTFTQLGNMKAHQNRFHKETLNALTAKLAEMNPSENIPLEERQLLEYFASIYKNSNRGIKGRGKGVGTKKSTISSPENHPASTILNPNTNANNAIANDSENNGNPEGNIDSSSNSNPGSHSMISPTQKDMGTLQSQFIQNNFNNSVNSSNPSNQPIINYNYTTLPHSRLGSSSSSNTNNNNSNFSVGAAPGVLMAPTTNNDFSFNLDQSNDNERSQQEQVRFKNINYKS.

Disordered regions lie at residues 1–63 (MPPP…ESIS), 93–124 (STGG…SQIG), and 138–275 (QQLQ…NSNQ). Residues 13–34 (QAGQNESQNQSSGEAGEQNQEH) are compositionally biased toward polar residues. The segment covering 44–56 (QSQPASSQPQHQQ) has biased composition (low complexity). Residue Ser-61 is modified to Phosphoserine. A compositionally biased stretch (polar residues) spans 107–116 (PRLSTSSTHQ). Residues 136–158 (QQQQLQNQHRQQQQQQQQQSHQQ) are polyglutamine domain. A compositionally biased stretch (low complexity) spans 138–158 (QQLQNQHRQQQQQQQQQSHQQ). Residues 164–194 (PSFSTGLTGSSSQYQFLPRNDNTSQPPSKRN) show a composition bias toward polar residues. Composition is skewed to low complexity over residues 206–222 (FEFF…FQPS) and 245–275 (SNGT…NSNQ). Residues Ser-286 and Ser-325 each carry the phosphoserine modification. Positions 326-415 (LSVNNKANGD…STDTTSNSRK (90 aa)) are disordered. Low complexity predominate over residues 359-390 (DSSNNNNNNNNNNNNENNNDNNNDNNDNSINS). Positions 362 to 386 (NNNNNNNNNNNNENNNDNNNDNNDN) are polyasparagine domain. Polar residues predominate over residues 391 to 412 (ATSTNIPNQEDHSLASTDTTSN). C2H2-type zinc fingers lie at residues 593–615 (HECP…VRSH), 621–643 (FVCD…ERLH), 649–671 (YSCD…LVTH), and 677–702 (FVCK…NRFH). Disordered stretches follow at residues 743-812 (GIKG…SPTQ) and 853-877 (RLGS…APGV). Over residues 754-770 (KKSTISSPENHPASTIL) the composition is skewed to polar residues. Low complexity-rich tracts occupy residues 771–782 (NPNTNANNAIAN), 796–809 (SSSN…SMIS), and 856–868 (SSSS…NNSN).

Its subcellular location is the nucleus. It is found in the cytoplasm. The protein localises to the cytosol. Its function is as follows. Transcription factor involved in the diauxic shift. In the presence of glucose, activates carbon and energy metabolism genes, and in te presence of glycerol-lactate, activates genes needed for cell wall maintenance. Binds to DNA elements with the sequence AAAAGAAA (A4GA3), a motif enriched in the promoters of AZF1-sensitive genes. Required for glucose induction of CLN3 transcription. Also required for proper FLO11 expression. May also function as a corepressor. Functionally, as an intrinsically disordered protein, AZF1 is capable of forming the prion [AZF1+] that confers resistance to the drug radicicol in a gain-of-function manner but decreases the expression of AZF1's target genes. The protein is Transcription factor AZF1 of Saccharomyces cerevisiae (strain ATCC 204508 / S288c) (Baker's yeast).